A 603-amino-acid chain; its full sequence is Deuterosome assembly protein 1 (603 aa).

5 coiled-coil regions span residues 14 to 59 (CEAE…NAQT), 85 to 197 (MTQN…GKKQ), 227 to 278 (IEKL…ELQS), 336 to 399 (QDQP…KQLK), and 454 to 480 (HTSI…NGKS). Phosphoserine is present on serine 546. A coiled-coil region spans residues 557 to 600 (AAQHFLLEEEKRAKELEKLLNTHIDELQRHTEFTLNKYSKLKQN).

It belongs to the CEP63 family. As to quaternary structure, interacts with CEP152; the interaction is mutually exclusive with CEP63.

Its subcellular location is the cytoplasm. Key structural component of the deuterosome, a structure that promotes de novo centriole amplification in multiciliated cells. Deuterosome-mediated centriole amplification occurs in terminally differentiated multiciliated cells and can generate more than 100 centrioles. Probably sufficient for the specification and formation of the deuterosome inner core. Interacts with CEP152 and recruits PLK4 to activate centriole biogenesis. The polypeptide is Deuterosome assembly protein 1 (Macaca fascicularis (Crab-eating macaque)).